The primary structure comprises 652 residues: ATP-binding cassette sub-family G member 5 (652 aa).

A disordered region spans residues 1-30; it reads MSELPFLSPEGARGPHNNRGSQSSLEEGSV. The Cytoplasmic portion of the chain corresponds to 1–384; the sequence is MSELPFLSPE…RVTRNLMRNK (384 aa). Positions 18 to 30 are enriched in polar residues; the sequence is NRGSQSSLEEGSV. The ABC transporter domain maps to 39-294; the sequence is LGVLNVSFSV…FNNCGYPCPE (256 aa). Position 87–94 (87–94) interacts with ATP; the sequence is GSSGSGKT. A helical membrane pass occupies residues 385 to 405; it reads QVVIMRLVQNLIMGLFLIFYL. In terms of domain architecture, ABC transmembrane type-2 spans 389–646; it reads MRLVQNLIMG…ILGMVVFKVR (258 aa). Residues 406 to 422 are Extracellular-facing; sequence LRVQNNMLKGAVQDRVG. A helical transmembrane segment spans residues 423–443; it reads LLYQLVGATPYTGMLNAVNLF. Topologically, residues 444–468 are cytoplasmic; the sequence is PMLRAVSDQESQDGLYQKWQMLLAY. Residues 469–490 traverse the membrane as a helical segment; that stretch reads VLHALPFSIVATVIFSSVCYWT. At 491-501 the chain is on the extracellular side; that stretch reads LGLYPEVARFG. The helical transmembrane segment at 502–522 threads the bilayer; sequence YFSAALLAPHLIGEFLTLVLL. Topologically, residues 523 to 529 are cytoplasmic; the sequence is GMVQNPN. Residues 530 to 550 form a helical membrane-spanning segment; the sequence is IVNSIVALLSISGLLIGSGFI. Residues 551–624 lie on the Extracellular side of the membrane; sequence RNIEEMPIPL…PGATSRFTTN (74 aa). N-linked (GlcNAc...) asparagine glycosylation is found at Asn-585 and Asn-592. Residues 625–645 form a helical membrane-spanning segment; that stretch reads FLILYSFIPTLVILGMVVFKV. The Cytoplasmic portion of the chain corresponds to 646 to 652; the sequence is RDYLISR.

The protein belongs to the ABC transporter superfamily. ABCG family. Eye pigment precursor importer (TC 3.A.1.204) subfamily. Heterodimer with ABCG8. Mg(2+) serves as cofactor. N-glycosylated. N-glycosylation is important for efficient export out of the endoplasmic reticulum. In terms of tissue distribution, detected in liver (at protein level). Expressed only in liver and intestine.

It localises to the cell membrane. Its subcellular location is the apical cell membrane. The catalysed reaction is cholesterol(in) + ATP + H2O = cholesterol(out) + ADP + phosphate + H(+). The enzyme catalyses sitosterol(in) + ATP + H2O = sitosterol(out) + ADP + phosphate + H(+). ABCG5 and ABCG8 form an obligate heterodimer that mediates Mg(2+)- and ATP-dependent sterol transport across the cell membrane. Plays an essential role in the selective transport of dietary plant sterols and cholesterol in and out of the enterocytes and in the selective sterol excretion by the liver into bile. Required for normal sterol homeostasis. The heterodimer with ABCG8 has ATPase activity. The protein is ATP-binding cassette sub-family G member 5 of Rattus norvegicus (Rat).